The primary structure comprises 511 residues: Phosphoenolpyruvate carboxylase (511 aa).

This sequence belongs to the PEPCase type 2 family. Homotetramer. Requires Mg(2+) as cofactor.

It catalyses the reaction oxaloacetate + phosphate = phosphoenolpyruvate + hydrogencarbonate. Allosterically inhibited by L-aspartate and L-malate. PEPC activity is not affected by allosteric activators of E.coli PEPC such as glucose 6-phosphate, fructose 1,6-bisphosphate, and acetyl coenzyme A. Its function is as follows. Catalyzes the irreversible beta-carboxylation of phosphoenolpyruvate (PEP) to form oxaloacetate (OAA), a four-carbon dicarboxylic acid source for the tricarboxylic acid cycle. This Saccharolobus solfataricus (strain ATCC 35092 / DSM 1617 / JCM 11322 / P2) (Sulfolobus solfataricus) protein is Phosphoenolpyruvate carboxylase.